A 185-amino-acid chain; its full sequence is MLTQPINLPKWLEENSHLLKPPINNYCVYNEGFTVMIVGGPNARTDYHINQTPEWFYQHRGAMLLKIVDPTDNNTFKDIIIRQGDMFLLPPNTPHNPVRFADTVGIVLEQERPEGSIDRMRWYCQSCKEIVHEASFHCTDLGTQIKAAVEAFKEDEEKRTCKKCGEVAAWKPAEGSLKDPNLEEA.

An O2-binding site is contributed by R44. H48, E54, and H95 together coordinate Fe cation. Substrate is bound at residue E54. Residues R99 and E109 each contribute to the substrate site. A divalent metal cation-binding residues include C124, C127, C161, and C164.

The protein belongs to the 3-HAO family. It depends on Fe(2+) as a cofactor.

The protein resides in the cytoplasm. The catalysed reaction is 3-hydroxyanthranilate + O2 = (2Z,4Z)-2-amino-3-carboxymuconate 6-semialdehyde. The protein operates within cofactor biosynthesis; NAD(+) biosynthesis; quinolinate from L-kynurenine: step 3/3. Functionally, catalyzes the oxidative ring opening of 3-hydroxyanthranilate to 2-amino-3-carboxymuconate semialdehyde, which spontaneously cyclizes to quinolinate. This is 3-hydroxyanthranilate 3,4-dioxygenase from Podospora anserina (strain S / ATCC MYA-4624 / DSM 980 / FGSC 10383) (Pleurage anserina).